The sequence spans 35 residues: Pheromone-binding protein 2 (35 aa).

This sequence belongs to the PBP/GOBP family. In terms of assembly, homodimer. Antenna.

Functionally, this major soluble protein in olfactory sensilla of male moths might serve to solubilize the extremely hydrophobic pheromone molecules and to transport pheromone through the aqueous lymph to receptors located on olfactory cilia. The protein is Pheromone-binding protein 2 of Lymantria dispar (Gypsy moth).